The sequence spans 259 residues: Aliphatic sulfonates import ATP-binding protein SsuB 1 (259 aa).

Residues 15-229 (VECRRITRRF…QASTPGFQAL (215 aa)) form the ABC transporter domain. 47-54 (GSSGSGKT) is a binding site for ATP.

Belongs to the ABC transporter superfamily. Aliphatic sulfonates importer (TC 3.A.1.17.2) family. The complex is composed of two ATP-binding proteins (SsuB), two transmembrane proteins (SsuC) and a solute-binding protein (SsuA).

It is found in the cell inner membrane. It carries out the reaction ATP + H2O + aliphatic sulfonate-[sulfonate-binding protein]Side 1 = ADP + phosphate + aliphatic sulfonateSide 2 + [sulfonate-binding protein]Side 1.. Its function is as follows. Part of the ABC transporter complex SsuABC involved in aliphatic sulfonates import. Responsible for energy coupling to the transport system. The sequence is that of Aliphatic sulfonates import ATP-binding protein SsuB 1 from Pseudomonas fluorescens (strain ATCC BAA-477 / NRRL B-23932 / Pf-5).